Here is a 28-residue protein sequence, read N- to C-terminus: Gamma-conotoxin-like de7a (28 aa).

Intrachain disulfides connect Cys2-Cys18, Cys9-Cys22, and Cys17-Cys27. The residue at position 4 (Pro4) is a 4-hydroxyproline. Residues Glu13 and Glu16 each carry the 4-carboxyglutamate modification. Ser28 bears the Serine amide mark.

Belongs to the conotoxin O1 superfamily. In terms of tissue distribution, expressed by the venom duct.

It localises to the secreted. In terms of biological role, gamma-conotoxins may act on voltage-gated non-specific cation pacemaker channels (HCN). The sequence is that of Gamma-conotoxin-like de7a from Conasprella delessertii (Sozon's cone).